Here is a 93-residue protein sequence, read N- to C-terminus: Small ribosomal subunit protein uS19 (93 aa).

It belongs to the universal ribosomal protein uS19 family.

Its function is as follows. Protein S19 forms a complex with S13 that binds strongly to the 16S ribosomal RNA. This chain is Small ribosomal subunit protein uS19, found in Campylobacter jejuni subsp. jejuni serotype O:6 (strain 81116 / NCTC 11828).